Reading from the N-terminus, the 156-residue chain is Ribosomal RNA large subunit methyltransferase H (156 aa).

S-adenosyl-L-methionine is bound by residues leucine 73, glycine 104, and leucine 123–leucine 128.

Belongs to the RNA methyltransferase RlmH family. As to quaternary structure, homodimer.

It localises to the cytoplasm. The catalysed reaction is pseudouridine(1915) in 23S rRNA + S-adenosyl-L-methionine = N(3)-methylpseudouridine(1915) in 23S rRNA + S-adenosyl-L-homocysteine + H(+). Specifically methylates the pseudouridine at position 1915 (m3Psi1915) in 23S rRNA. This Shewanella denitrificans (strain OS217 / ATCC BAA-1090 / DSM 15013) protein is Ribosomal RNA large subunit methyltransferase H.